We begin with the raw amino-acid sequence, 126 residues long: Aspartate 1-decarboxylase (126 aa).

Residue Ser-25 is the Schiff-base intermediate with substrate; via pyruvic acid of the active site. The residue at position 25 (Ser-25) is a Pyruvic acid (Ser). Thr-57 contacts substrate. Residue Tyr-58 is the Proton donor of the active site. Residue 73–75 (GAA) participates in substrate binding.

Belongs to the PanD family. In terms of assembly, heterooctamer of four alpha and four beta subunits. Pyruvate is required as a cofactor. In terms of processing, is synthesized initially as an inactive proenzyme, which is activated by self-cleavage at a specific serine bond to produce a beta-subunit with a hydroxyl group at its C-terminus and an alpha-subunit with a pyruvoyl group at its N-terminus.

It localises to the cytoplasm. It carries out the reaction L-aspartate + H(+) = beta-alanine + CO2. The protein operates within cofactor biosynthesis; (R)-pantothenate biosynthesis; beta-alanine from L-aspartate: step 1/1. Catalyzes the pyruvoyl-dependent decarboxylation of aspartate to produce beta-alanine. The sequence is that of Aspartate 1-decarboxylase from Pectobacterium carotovorum subsp. carotovorum (strain PC1).